The chain runs to 314 residues: Olfactory receptor 5P81 (314 aa).

Over 1–28 the chain is Extracellular; it reads MAFLEDGNHTVVTEFILLGLTDDPVLRV. N-linked (GlcNAc...) asparagine glycosylation occurs at N8. The chain crosses the membrane as a helical span at residues 29–49; sequence ILFIIILCIYLVTVSGNLSTI. At 50–57 the chain is on the cytoplasmic side; sequence LLIRVSSQ. The chain crosses the membrane as a helical span at residues 58-78; sequence LHHPMYFFLSHLASIDIAISS. At 79 to 102 the chain is on the extracellular side; the sequence is SVTPNMVVNFLVERSSISYIGCGI. C100 and C192 are disulfide-bonded. A helical membrane pass occupies residues 103-123; sequence QLGSAVFFGAIECFLLAVMAY. Residues 124–136 lie on the Cytoplasmic side of the membrane; that stretch reads DRFVAICNPLLYS. A helical membrane pass occupies residues 137 to 157; sequence TKMSKQVCIQLLVGSYIGGFI. Residues 158 to 199 lie on the Extracellular side of the membrane; sequence HASFFTLSFVSFLFCGPNRINHFFCDFTPLVELSCSDNSVLI. A helical transmembrane segment spans residues 200–220; the sequence is ILDSFSTGTIIVITVFVIAIS. Topologically, residues 221-240 are cytoplasmic; the sequence is YTCILITILKMHSTEGRHKA. The chain crosses the membrane as a helical span at residues 241-261; the sequence is FSTCTSHLTVVTLLYGTVTFI. Residues 262–274 lie on the Extracellular side of the membrane; sequence YVMPKSSYSTDQN. Residues 275-295 form a helical membrane-spanning segment; it reads KVISVFYMVVIPMLNPIIYSL. Over 296–314 the chain is Cytoplasmic; that stretch reads RNNEIKGALKKQLGEKNIF.

Belongs to the G-protein coupled receptor 1 family.

It localises to the cell membrane. In terms of biological role, potential odorant receptor. The protein is Olfactory receptor 5P81 of Mus musculus (Mouse).